Consider the following 118-residue polypeptide: Large ribosomal subunit protein uL18 (118 aa).

Belongs to the universal ribosomal protein uL18 family. Part of the 50S ribosomal subunit; part of the 5S rRNA/L5/L18/L25 subcomplex. Contacts the 5S and 23S rRNAs.

This is one of the proteins that bind and probably mediate the attachment of the 5S RNA into the large ribosomal subunit, where it forms part of the central protuberance. This is Large ribosomal subunit protein uL18 from Nitrosospira multiformis (strain ATCC 25196 / NCIMB 11849 / C 71).